A 254-amino-acid chain; its full sequence is MEYFAKRIIPCLDVKDGRVVKGVNFVGLRDAGDPVEAAIRYNEEGADELTFLDITASHEGRKPIVDIVKEVAKEVFIPLTVGGGISELSDIYDLLNVGCDKVSINSAAVKNPDFINKSSKRFGSQCIVVAIDVKKIAPNKWHVFIKGGREDTGLDAIEWAKEVVDRGAGEILLTSMDTDGTKAGFDIEITEIISKLVHVPVIASGGAGKMEHFKEVFEHSADAALAASIFHFKEIDIMDLKQYLHKNNISVRIN.

Active-site residues include D13 and D132.

This sequence belongs to the HisA/HisF family. Heterodimer of HisH and HisF.

Its subcellular location is the cytoplasm. The enzyme catalyses 5-[(5-phospho-1-deoxy-D-ribulos-1-ylimino)methylamino]-1-(5-phospho-beta-D-ribosyl)imidazole-4-carboxamide + L-glutamine = D-erythro-1-(imidazol-4-yl)glycerol 3-phosphate + 5-amino-1-(5-phospho-beta-D-ribosyl)imidazole-4-carboxamide + L-glutamate + H(+). Its pathway is amino-acid biosynthesis; L-histidine biosynthesis; L-histidine from 5-phospho-alpha-D-ribose 1-diphosphate: step 5/9. Functionally, IGPS catalyzes the conversion of PRFAR and glutamine to IGP, AICAR and glutamate. The HisF subunit catalyzes the cyclization activity that produces IGP and AICAR from PRFAR using the ammonia provided by the HisH subunit. This chain is Imidazole glycerol phosphate synthase subunit HisF, found in Nautilia profundicola (strain ATCC BAA-1463 / DSM 18972 / AmH).